We begin with the raw amino-acid sequence, 540 residues long: Tyrosinase (540 aa).

A signal peptide spans 1–19 (MKSLFLSAVLLQFFETCWS). Over 20–480 (QFPRPCANSE…LQQAQQIWQW (461 aa)) the chain is Lumenal, melanosome. N-linked (GlcNAc...) asparagine glycosylation is present at Asn87. 3 residues coordinate Cu cation: His182, His205, and His214. Asn233, Asn293, and Asn340 each carry an N-linked (GlcNAc...) asparagine glycan. His366 and His370 together coordinate Cu cation. A glycan (N-linked (GlcNAc...) asparagine) is linked at Asn374. Cu cation is bound at residue His393. Residues 481–501 (LLGAGILGALIATIVAAVIVF) form a helical membrane-spanning segment. At 502-540 (ARRKRRRNQKRKRAPSFGERQPLLQSSSEEGSSSYQTTL) the chain is on the cytoplasmic side. Residues 511–540 (KRKRAPSFGERQPLLQSSSEEGSSSYQTTL) form a disordered region. Low complexity predominate over residues 527–540 (SSSEEGSSSYQTTL).

Belongs to the tyrosinase family. It depends on Cu(2+) as a cofactor.

It is found in the melanosome membrane. It catalyses the reaction 2 L-dopa + O2 = 2 L-dopaquinone + 2 H2O. It carries out the reaction L-tyrosine + O2 = L-dopaquinone + H2O. In terms of biological role, this is a copper-containing oxidase that functions in the formation of pigments such as melanins and other polyphenolic compounds. The polypeptide is Tyrosinase (tyr) (Oryzias latipes (Japanese rice fish)).